We begin with the raw amino-acid sequence, 64 residues long: Beta-defensin 5 (64 aa).

A signal peptide spans Met1 to Thr22. Pyrrolidone carboxylic acid is present on Gln23. 3 disulfides stabilise this stretch: Cys31/Cys60, Cys38/Cys53, and Cys43/Cys61.

This sequence belongs to the beta-defensin family. As to expression, neutrophilic granules. Alveolar macrophages.

The protein localises to the secreted. In terms of biological role, has bactericidal activity. Active against E.coli ML35 but not against S.aureus 502A. The chain is Beta-defensin 5 (DEFB5) from Bos taurus (Bovine).